A 266-amino-acid chain; its full sequence is Glutamate racemase (266 aa).

Substrate is bound by residues 9 to 10 and 41 to 42; these read DS and YG. The Proton donor/acceptor role is filled by Cys72. 73–74 is a substrate binding site; the sequence is NT. Catalysis depends on Cys183, which acts as the Proton donor/acceptor. Residue 184-185 coordinates substrate; sequence TH.

It belongs to the aspartate/glutamate racemases family.

The catalysed reaction is L-glutamate = D-glutamate. It participates in cell wall biogenesis; peptidoglycan biosynthesis. Its function is as follows. Provides the (R)-glutamate required for cell wall biosynthesis. The polypeptide is Glutamate racemase (Listeria monocytogenes serotype 4b (strain CLIP80459)).